Here is a 344-residue protein sequence, read N- to C-terminus: Dihydroorotase (344 aa).

Zn(2+) is bound by residues His14 and His16. Substrate-binding positions include 16–18 (HLR) and Asn42. 3 residues coordinate Zn(2+): Lys100, His137, and His175. Lys100 is modified (N6-carboxylysine). His137 contacts substrate. Leu220 serves as a coordination point for substrate. Asp248 lines the Zn(2+) pocket. Residue Asp248 is part of the active site. Residues His252 and Ala264 each coordinate substrate.

The protein belongs to the metallo-dependent hydrolases superfamily. DHOase family. Class II DHOase subfamily. In terms of assembly, homodimer. The cofactor is Zn(2+).

It catalyses the reaction (S)-dihydroorotate + H2O = N-carbamoyl-L-aspartate + H(+). It functions in the pathway pyrimidine metabolism; UMP biosynthesis via de novo pathway; (S)-dihydroorotate from bicarbonate: step 3/3. Catalyzes the reversible cyclization of carbamoyl aspartate to dihydroorotate. In Cupriavidus necator (strain ATCC 17699 / DSM 428 / KCTC 22496 / NCIMB 10442 / H16 / Stanier 337) (Ralstonia eutropha), this protein is Dihydroorotase.